The chain runs to 287 residues: Ribosomal RNA small subunit methyltransferase A (287 aa).

Positions 18, 20, 45, 66, 91, and 118 each coordinate S-adenosyl-L-methionine.

This sequence belongs to the class I-like SAM-binding methyltransferase superfamily. rRNA adenine N(6)-methyltransferase family. RsmA subfamily.

It is found in the cytoplasm. It carries out the reaction adenosine(1518)/adenosine(1519) in 16S rRNA + 4 S-adenosyl-L-methionine = N(6)-dimethyladenosine(1518)/N(6)-dimethyladenosine(1519) in 16S rRNA + 4 S-adenosyl-L-homocysteine + 4 H(+). Specifically dimethylates two adjacent adenosines (A1518 and A1519) in the loop of a conserved hairpin near the 3'-end of 16S rRNA in the 30S particle. May play a critical role in biogenesis of 30S subunits. This chain is Ribosomal RNA small subunit methyltransferase A, found in Haemophilus influenzae (strain ATCC 51907 / DSM 11121 / KW20 / Rd).